The chain runs to 648 residues: MEALLQQSRAMCPFLKRSSPNTLRSLATATRPSTSPGGGTMTNLQRIARRCPVMSKALAVQSARMTGTKRFTSSAAGVPGAGAGTPKPTRGSPGKRALHSTGGNGANMSTEFHKGAQQIHPGLSNATRSHVGASATVSGPTPRAPVAAPFDYDAFYNAELQKKHQDKSYRYFNNINRLAQEFPRAHTASKDEKVTVWCSNDYLGMGRNPEVLATMHKTLDTYGAGAGGTRNISGHNQHAVSLENTLAKLHGKEAALVFSSCFVANDATLATLGSKMPDCVILSDSLNHASMIQGIRHSGAKKMVFKHNDLVDLETKLASLPLHVPKIIAFESVYSMCGSIAPIEAICDLADKYGAITFLDEVHAVGMYGPHGAGVAEHLDYEIYASQDTANPLSTKGTVMDRINIITGTLGKAYGCVGGYIAGSAALVDTIRSLAPGFIFTTSLPPATMAGADTAIRYQARHQQDRILQQLHTRAVKQSFKDLDIPVIPNPSHIVPLLVGDAELAKQASDKLLEEHGIYVQAINYPTVPRGEERLRITPTPGHTQELRDHLVEAVNTVWNDLGIKRASDWKAMGGFVGVGVEAAELENQPIWTDAQLNMRPDETLEAAVEREFQAAVPGMKAGGAKAKPVGSIAANPIGASIPVAAAA.

The transit peptide at 1–26 (MEALLQQSRAMCPFLKRSSPNTLRSL) directs the protein to the mitochondrion. Residues 69–109 (KRFTSSAAGVPGAGAGTPKPTRGSPGKRALHSTGGNGANMS) form a disordered region. Substrate is bound by residues arginine 170, serine 283, and lysine 302. 3 residues coordinate pyridoxal 5'-phosphate: serine 335, histidine 363, and threonine 409. Residue lysine 412 is part of the active site. Position 412 is an N6-(pyridoxal phosphate)lysine (lysine 412). Residues threonine 441 and threonine 442 each coordinate pyridoxal 5'-phosphate. Threonine 527 provides a ligand contact to substrate.

This sequence belongs to the class-II pyridoxal-phosphate-dependent aminotransferase family. In terms of assembly, homodimer. It depends on pyridoxal 5'-phosphate as a cofactor.

The protein localises to the mitochondrion matrix. The enzyme catalyses succinyl-CoA + glycine + H(+) = 5-aminolevulinate + CO2 + CoA. It participates in porphyrin-containing compound metabolism; protoporphyrin-IX biosynthesis; 5-aminolevulinate from glycine: step 1/1. Functionally, catalyzes the synthesis of 5-aminolevulinate (ALA) from succinyl-CoA and glycine, the first and rate-limiting step in heme biosynthesis. The sequence is that of 5-aminolevulinate synthase, mitochondrial (hemA) from Emericella nidulans (strain FGSC A4 / ATCC 38163 / CBS 112.46 / NRRL 194 / M139) (Aspergillus nidulans).